Here is a 453-residue protein sequence, read N- to C-terminus: tRNA modification GTPase MnmE (453 aa).

Residues Arg22, Glu79, and Lys119 each coordinate (6S)-5-formyl-5,6,7,8-tetrahydrofolate. The region spanning 215-376 (GMKVVIAGRP…LKQHLKSLMG (162 aa)) is the TrmE-type G domain. Asn225 provides a ligand contact to K(+). GTP-binding positions include 225 to 230 (NAGKSS), 244 to 250 (TEIAGTT), 269 to 272 (DTAG), and 334 to 337 (NKAD). Ser229 is a binding site for Mg(2+). The K(+) site is built by Thr244, Ile246, and Thr249. Thr250 is a binding site for Mg(2+). Lys453 is a binding site for (6S)-5-formyl-5,6,7,8-tetrahydrofolate.

It belongs to the TRAFAC class TrmE-Era-EngA-EngB-Septin-like GTPase superfamily. TrmE GTPase family. As to quaternary structure, homodimer. Heterotetramer of two MnmE and two MnmG subunits. It depends on K(+) as a cofactor.

Its subcellular location is the cytoplasm. Its function is as follows. Exhibits a very high intrinsic GTPase hydrolysis rate. Involved in the addition of a carboxymethylaminomethyl (cmnm) group at the wobble position (U34) of certain tRNAs, forming tRNA-cmnm(5)s(2)U34. The chain is tRNA modification GTPase MnmE from Shewanella oneidensis (strain ATCC 700550 / JCM 31522 / CIP 106686 / LMG 19005 / NCIMB 14063 / MR-1).